The following is a 344-amino-acid chain: Outer membrane protein B (344 aa).

An N-terminal signal peptide occupies residues 1 to 30 (MNSKMLKHLRLATLSFSMFFGIVSSPAVYA).

Belongs to the chlamydial OMP family.

The protein localises to the cell outer membrane. The protein is Outer membrane protein B (ompB) of Chlamydia pneumoniae (Chlamydophila pneumoniae).